The sequence spans 150 residues: 3-dehydroquinate dehydratase (150 aa).

The active-site Proton acceptor is the Tyr-26. The substrate site is built by Asn-77, His-83, and Asp-90. His-103 acts as the Proton donor in catalysis. Substrate contacts are provided by residues 104–105 (IS) and Arg-114.

The protein belongs to the type-II 3-dehydroquinase family. As to quaternary structure, homododecamer.

The enzyme catalyses 3-dehydroquinate = 3-dehydroshikimate + H2O. It functions in the pathway metabolic intermediate biosynthesis; chorismate biosynthesis; chorismate from D-erythrose 4-phosphate and phosphoenolpyruvate: step 3/7. In terms of biological role, catalyzes a trans-dehydration via an enolate intermediate. The polypeptide is 3-dehydroquinate dehydratase (Buchnera aphidicola subsp. Acyrthosiphon pisum (strain 5A)).